A 150-amino-acid polypeptide reads, in one-letter code: MGVPKKYALVSGTGEADTSLAAFDAALIDAGIGDCNLVELSSILPPNAEEDDLPEFPPGSIVPAVVAKAVGRGLVSSCICVGRLESGLGIVSERAATDSVETVRRLAKRDVEEMARLRGEKLVEVRTVTASTEPEDAEWAAAVAAVVFWG.

Ser-42 carries the post-translational modification Pyruvic acid (Ser).

Belongs to the PdaD family. The cofactor is pyruvate.

It carries out the reaction L-arginine + H(+) = agmatine + CO2. This Methanopyrus kandleri (strain AV19 / DSM 6324 / JCM 9639 / NBRC 100938) protein is Pyruvoyl-dependent arginine decarboxylase.